The following is a 150-amino-acid chain: MTFDDKKGLQVALDQAKKSYSEGGIPIGSCIISSDDTVLGQGHNERIQKHSAILHGEMSALENAGRLPGKTYKDCTIYTTLSPCSMCTGAILLYGFKRVVMGENVNFLGNEKLLIENGVEVVNLNDQECIDLMAKFIKEKPQDWNEDIGE.

A CMP/dCMP-type deaminase domain is found at 3-121; it reads FDDKKGLQVA…KLLIENGVEV (119 aa). Position 44 (asparagine 44) interacts with substrate. Histidine 55 provides a ligand contact to Zn(2+). Glutamate 57 acts as the Proton donor in catalysis. 2 residues coordinate Zn(2+): cysteine 84 and cysteine 87. Aspartate 147 lines the substrate pocket.

This sequence belongs to the cytidine and deoxycytidylate deaminase family. As to quaternary structure, homodimer. Zn(2+) is required as a cofactor.

The protein localises to the cytoplasm. Its subcellular location is the nucleus. It carries out the reaction cytosine + H2O + H(+) = uracil + NH4(+). It functions in the pathway pyrimidine metabolism; UMP biosynthesis via salvage pathway; uracil from cytosine: step 1/1. Catalyzes the hydrolytic deamination of cytosine to uracil or 5-methylcytosine to thymine. Is involved in the pyrimidine salvage pathway, which allows the cell to utilize cytosine for pyrimidine nucleotide synthesis. This is Cytosine deaminase from Candida albicans (strain SC5314 / ATCC MYA-2876) (Yeast).